Here is a 123-residue protein sequence, read N- to C-terminus: uncharacterized protein (123 aa).

A signal peptide spans 1–25; it reads MKHGIKALLITLSLACAGMSHSALA. Low complexity predominate over residues 40 to 53; that stretch reads EAPAAQSKAAVPAK. The interval 40–62 is disordered; that stretch reads EAPAAQSKAAVPAKASDEEGTRV. HhH domains follow at residues 60 to 90 and 91 to 120; these read TRVS…IVSY and REEY…NLAV.

This is an uncharacterized protein from Escherichia coli (strain K12).